Here is a 519-residue protein sequence, read N- to C-terminus: 2,3-bisphosphoglycerate-independent phosphoglycerate mutase (519 aa).

Mn(2+) is bound by residues aspartate 9 and serine 60. Serine 60 functions as the Phosphoserine intermediate in the catalytic mechanism. The segment covering 76–91 has biased composition (basic and acidic residues); the sequence is DSARVSDSIARSRGEA. The interval 76–102 is disordered; it reads DSARVSDSIARSRGEAPPDDDAQDPPF. Substrate is bound by residues histidine 134, 163–164, arginine 195, arginine 201, 267–270, and lysine 341; these read RD and RSDR. Residues aspartate 408, histidine 412, aspartate 449, histidine 450, and histidine 466 each coordinate Mn(2+).

It belongs to the BPG-independent phosphoglycerate mutase family. Mn(2+) serves as cofactor.

It carries out the reaction (2R)-2-phosphoglycerate = (2R)-3-phosphoglycerate. It participates in carbohydrate degradation; glycolysis; pyruvate from D-glyceraldehyde 3-phosphate: step 3/5. Functionally, catalyzes the interconversion of 2-phosphoglycerate and 3-phosphoglycerate. This is 2,3-bisphosphoglycerate-independent phosphoglycerate mutase from Haloarcula marismortui (strain ATCC 43049 / DSM 3752 / JCM 8966 / VKM B-1809) (Halobacterium marismortui).